A 126-amino-acid chain; its full sequence is MNKHNLRLVQLASELILIEIIPKLFLSQVTTISHIKREKIPPNHRKGILCMFPWQCVVYVFSNFVWLVIHRFSNGFIQFLGEPYRLMTASGTHGRIKFMVDIPIIKNTQVLRIPVLKDPKMLSKKH.

A helical transmembrane segment spans residues 48–68 (ILCMFPWQCVVYVFSNFVWLV).

The protein localises to the membrane. This is an uncharacterized protein from Homo sapiens (Human).